Consider the following 399-residue polypeptide: Acetate kinase (399 aa).

Asn-9 lines the Mg(2+) pocket. Residue Lys-16 participates in ATP binding. Arg-90 is a substrate binding site. The Proton donor/acceptor role is filled by Asp-147. ATP-binding positions include 207–211, 281–283, and 333–337; these read HLGNG, DFR, and GVGEN. Glu-387 lines the Mg(2+) pocket.

It belongs to the acetokinase family. Homodimer. The cofactor is Mg(2+). Mn(2+) is required as a cofactor.

The protein localises to the cytoplasm. It carries out the reaction acetate + ATP = acetyl phosphate + ADP. It participates in metabolic intermediate biosynthesis; acetyl-CoA biosynthesis; acetyl-CoA from acetate: step 1/2. Functionally, catalyzes the formation of acetyl phosphate from acetate and ATP. Can also catalyze the reverse reaction. The chain is Acetate kinase from Mycobacterium sp. (strain JLS).